We begin with the raw amino-acid sequence, 528 residues long: Protein WHAT'S THIS FACTOR 1 homolog, chloroplastic (528 aa).

The N-terminal 73 residues, 1–73 (MEPKLLLSAH…KTRVVVEPVR (73 aa)), are a transit peptide targeting the chloroplast. The PORR domain occupies 80-408 (KELTFDSVVQ…VKEKMRALVS (329 aa)). Residues 410 to 528 (PRFPRRGGPR…FPDGTPREKW (119 aa)) form a disordered region. The segment covering 418-428 (PRKDEEGREVE) has biased composition (basic and acidic residues). Residues 429–491 (IDGSDADGEE…DDDDEDEEED (63 aa)) are compositionally biased toward acidic residues.

Its subcellular location is the plastid. The protein localises to the chloroplast. RNA-binding protein involved in group II intron splicing. Binds specific group II introns and promotes their splicing. Functions in the context of a heterodimer with the ribonuclease III domain-containing protein RNC1. This is Protein WHAT'S THIS FACTOR 1 homolog, chloroplastic from Arabidopsis thaliana (Mouse-ear cress).